A 512-amino-acid polypeptide reads, in one-letter code: mRNA export factor (512 aa).

Positions 1-242 (MATDIDMLID…PVPERKAPSA (242 aa)) are disordered. Residues 5–17 (IDMLIDLGLDLSD) carry the Nuclear export signal motif. A phosphoserine; by host mark is found at S16 and S18. Acidic residues-rich tracts occupy residues 16-28 (SDSELEEDALERD) and 36-55 (PESDSSGECSSSDEDMEDPC). The interval 104–112 (VWSRLGTRR) is interaction with host ALYREF. The Nuclear localization signal signature appears at 110 to 138 (TRRSASPREPHGGKVARIQPPSTKAPHPR). At S113 the chain carries Phosphoserine; by host. The span at 135 to 149 (PHPRGGRRGRRRGRG) shows a compositional bias: basic residues. At R138 the chain carries Dimethylated arginine; by host. An RGG-box region spans residues 138–152 (RGGRRGRRRGRGRYG). R148 bears the Omega-N-methylarginine; by host mark. R150 carries the post-translational modification Dimethylated arginine; by host. Over residues 228–240 (ADGRAPVPERKAP) the composition is skewed to basic and acidic residues. 4 residues coordinate Zn(2+): C400, H479, C483, and C488. A CHC2-type zinc finger spans residues 400-488 (CYLKARGLCG…HRQECSSRVC (89 aa)).

The protein belongs to the HHV-1 ICP27 protein family. Interacts with host RBP1; this interaction facilitates the RNA polymerase recruitment to viral transcription sites. Interacts (via the RGG box) with host ALYREF/THOC4; this interaction recruits ALYREF to viral replication compartments and probably directs viral mRNA to the TAP/NFX1 pathway. Interacts (via the RGG box) with host SRPK1; this interaction relocalizes SRPK1 to the nucleus and seems to alter its activity. Interacts with ICP4; this interaction modulates ICP4 DNA-binding activity. Interacts with host NXF1; this interaction allows efficient export of HSV-1 early and late transcripts. Interacts with host IRF3; this interaction inhibits IRF3 phosphorylation and nuclear translocation. Methylated within the RGG box possibly by host PRMT1. When hypomethylated, ICP27 is exported to the cytoplasm earlier and more rapidly. In terms of processing, phosphorylated.

The protein resides in the host cytoplasm. It is found in the host nucleus. Its function is as follows. Multifunctional regulator of the expression of viral genes that contributes to the shutoff of host protein synthesis and mediates nuclear export of viral intronless mRNAs. Also stimulates translation of viral transcripts. Independently, plays a role in the regulation of virion release. Also plays a role in the inhibition of host innate immune response by targeting host IRF3 and thereby preventing production of beta-interferon. Silences the 3' splice site of the host promyelocytic leukemia (PML) intron 7a, thereby switching PML isoforms from PML-II to PML-V. This could be linked to the accelerated mRNA export induced by ICP27 which might not provide sufficient time for PML pre-mRNA to be spliced in the nucleus. Also suppresses splicing of the viral ICP34.5 mRNA, allowing the virus to express a variant form of ICP34.5. The protein is mRNA export factor of Human herpesvirus 2 (strain HG52) (HHV-2).